We begin with the raw amino-acid sequence, 871 residues long: Patatin-like phospholipase domain-containing protein CNBE2340 (871 aa).

The segment at 20–53 (NEDSPLSPRSFSLPPESPQLSTASPIHQRVSRKR) is disordered. Residues 23 to 33 (SPLSPRSFSLP) show a composition bias toward low complexity. Residues 68-88 (WPLLFFIFFIIYLEFSAYVIT) traverse the membrane as a helical segment. Positions 243–435 (LCLSGGASFG…REDIPLGSLH (193 aa)) constitute a PNPLA domain. The GXSXG signature appears at 274–278 (GTSAG). Ser-276 acts as the Nucleophile in catalysis. The active-site Proton acceptor is Asp-422. Disordered stretches follow at residues 586-707 (ALSH…NFGD), 720-748 (LSSP…QRFR), and 760-871 (VSES…QDGA). Composition is skewed to polar residues over residues 594–606 (NDPA…TNPE) and 687–706 (PTHS…SNFG). Residues 721–748 (SSPFRSIRSNTSSSSNNVQSPSSSQRFR) are compositionally biased toward low complexity. Basic and acidic residues predominate over residues 798 to 820 (VESHSDRSEDEMLHSGANVKEEY).

It belongs to the PLPL family.

The protein resides in the membrane. In terms of biological role, probable lipid hydrolase. The sequence is that of Patatin-like phospholipase domain-containing protein CNBE2340 from Cryptococcus neoformans var. neoformans serotype D (strain B-3501A) (Filobasidiella neoformans).